The following is a 95-amino-acid chain: Aspartyl/glutamyl-tRNA(Asn/Gln) amidotransferase subunit C (95 aa).

It belongs to the GatC family. As to quaternary structure, heterotrimer of A, B and C subunits.

It catalyses the reaction L-glutamyl-tRNA(Gln) + L-glutamine + ATP + H2O = L-glutaminyl-tRNA(Gln) + L-glutamate + ADP + phosphate + H(+). The catalysed reaction is L-aspartyl-tRNA(Asn) + L-glutamine + ATP + H2O = L-asparaginyl-tRNA(Asn) + L-glutamate + ADP + phosphate + 2 H(+). Its function is as follows. Allows the formation of correctly charged Asn-tRNA(Asn) or Gln-tRNA(Gln) through the transamidation of misacylated Asp-tRNA(Asn) or Glu-tRNA(Gln) in organisms which lack either or both of asparaginyl-tRNA or glutaminyl-tRNA synthetases. The reaction takes place in the presence of glutamine and ATP through an activated phospho-Asp-tRNA(Asn) or phospho-Glu-tRNA(Gln). In Dechloromonas aromatica (strain RCB), this protein is Aspartyl/glutamyl-tRNA(Asn/Gln) amidotransferase subunit C.